Reading from the N-terminus, the 349-residue chain is Cobalt-precorrin-5B C(1)-methyltransferase (349 aa).

It belongs to the CbiD family.

The enzyme catalyses Co-precorrin-5B + S-adenosyl-L-methionine = Co-precorrin-6A + S-adenosyl-L-homocysteine. It participates in cofactor biosynthesis; adenosylcobalamin biosynthesis; cob(II)yrinate a,c-diamide from sirohydrochlorin (anaerobic route): step 6/10. Its function is as follows. Catalyzes the methylation of C-1 in cobalt-precorrin-5B to form cobalt-precorrin-6A. The polypeptide is Cobalt-precorrin-5B C(1)-methyltransferase (Saccharolobus solfataricus (strain ATCC 35092 / DSM 1617 / JCM 11322 / P2) (Sulfolobus solfataricus)).